Reading from the N-terminus, the 481-residue chain is Cytochrome P450 monooxygenase dpfgJ (481 aa).

A helical membrane pass occupies residues 23–43; it reads LVFTQAAVIGSILFVFLLGLY. Asn338 carries an N-linked (GlcNAc...) asparagine glycan. Cys427 is a binding site for heme.

The protein belongs to the cytochrome P450 family. The cofactor is heme.

The protein resides in the membrane. It participates in secondary metabolite biosynthesis; terpenoid biosynthesis. Its function is as follows. Cytochrome P450 monooxygenase; part of the gene cluster that mediates the biosynthesis of diterpenoid pyrones. The first step of the pathway is the synthesis of the alpha-pyrone moiety by the polyketide synthase dpfgA via condensation of one acetyl-CoA starter unit with 3 malonyl-CoA units and 2 methylations. The alpha-pyrone is then combined with geranylgeranyl pyrophosphate (GGPP) formed by the GGPP synthase dpfgD through the action of the prenyltransferase dpfgC to yield a linear alpha-pyrone diterpenoid. Subsequent steps in the diterpenoid pyrone biosynthetic pathway involve the decalin core formation, which is initiated by the epoxidation of the C10-C11 olefin by the FAD-dependent oxidoreductase dpfgE, and is followed by a cyclization cascade catalyzed by the terpene cyclase dpfgB. The short chain dehydrogenase/reductase dpfgG then oxidizes the 8S hydroxy group to a ketone and the short chain dehydrogenase/reductase dpfgH reduces the ketone to the 8R hydroxy group to yield higginsianin B. Higginsianin B is further methylated by the methyltransferase dpfgI to produce the intermediate named FDDP B. The cytochrome P450 monooxygenase dfgpJ then catalyzes a three-step oxidation at C-27 to generate a carboxylic acid as well as C-26 hydroxylation. Finally, methyltransferase dpfgK methylates the carboxylic acid generated by dpfgJ, yielding the final diterpenoid pyrones from the pathway which were named FDDP D and FDDP E. This Gibberella zeae (strain ATCC MYA-4620 / CBS 123657 / FGSC 9075 / NRRL 31084 / PH-1) (Wheat head blight fungus) protein is Cytochrome P450 monooxygenase dpfgJ.